The chain runs to 302 residues: GTPase Era (302 aa).

Positions Arg10–Glu178 constitute an Era-type G domain. Residues Gly18–Ser25 form a G1 region. GTP is bound at residue Gly18–Ser25. Residues Gln44–His48 are G2. The G3 stretch occupies residues Asp65–Gly68. Residues Asp65–Met69 and Asn127–Asp130 contribute to the GTP site. Residues Asn127–Asp130 form a G4 region. The G5 stretch occupies residues Ile157–Ala159. The KH type-2 domain maps to Val201–Gly285.

Belongs to the TRAFAC class TrmE-Era-EngA-EngB-Septin-like GTPase superfamily. Era GTPase family. In terms of assembly, monomer.

It is found in the cytoplasm. It localises to the cell inner membrane. An essential GTPase that binds both GDP and GTP, with rapid nucleotide exchange. Plays a role in 16S rRNA processing and 30S ribosomal subunit biogenesis and possibly also in cell cycle regulation and energy metabolism. This chain is GTPase Era, found in Pseudomonas putida (strain ATCC 47054 / DSM 6125 / CFBP 8728 / NCIMB 11950 / KT2440).